Reading from the N-terminus, the 336-residue chain is Adenylate isopentenyltransferase 3, chloroplastic (336 aa).

Residues Met-1–Ser-55 constitute a chloroplast transit peptide. Gly-48–Ser-55 is an ATP binding site. The residue at position 333 (Cys-333) is a Cysteine methyl ester. A lipid anchor (S-farnesyl cysteine) is attached at Cys-333. Positions Leu-334–Ala-336 are cleaved as a propeptide — removed in mature form.

The protein belongs to the IPP transferase family. Post-translationally, farnesylated. Expressed the phloem companion cells.

It is found in the plastid. It localises to the chloroplast. The protein resides in the nucleus membrane. The protein localises to the cytoplasm. The enzyme catalyses dimethylallyl diphosphate + ADP = N(6)-(dimethylallyl)adenosine 5'-diphosphate + diphosphate. The catalysed reaction is dimethylallyl diphosphate + ATP = N(6)-(dimethylallyl)adenosine 5'-triphosphate + diphosphate. In terms of biological role, involved in cytokinin biosynthesis. Catalyzes the transfer of an isopentenyl group from dimethylallyl diphosphate (DMAPP) to ATP and ADP. In Arabidopsis thaliana (Mouse-ear cress), this protein is Adenylate isopentenyltransferase 3, chloroplastic (IPT3).